Here is a 185-residue protein sequence, read N- to C-terminus: MFPLNFHYEDVLRQDLLLKLNYANVMEVPGLCEIRVVPKAPYNFIIKNGKLAMEIPCGQKFIQTQRGSTGKSFRSNPFLGSNKDKGYVSDLARQSTLRGHGMSNFLVRILTVMSLLDFPVEIRKNSIQFSMETEFCEFSPELEDHFEIFEHIRGFNVTIITSANTQDETLLLWSGFLQKDEGETQ.

It belongs to the universal ribosomal protein uL5 family. Component of the mitochondrial ribosome large subunit.

It localises to the mitochondrion. This is Large ribosomal subunit protein uL5m (RPL5) from Arabidopsis thaliana (Mouse-ear cress).